Consider the following 422-residue polypeptide: uncharacterized protein (422 aa).

Phosphoserine occurs at positions 124, 126, and 151. The segment at 144–166 (TNSLNHDSPPSTPPRRPDTSTSK) is disordered. K250 is covalently cross-linked (Glycyl lysine isopeptide (Lys-Gly) (interchain with G-Cter in SUMO2)). Disordered regions lie at residues 251 to 285 (ADTTTGSKPTGVFSRLGATPETDEDLAWDSDNDSS) and 299 to 324 (GRGPAKASPQPALTVKAKATSSATTA). Acidic residues predominate over residues 271 to 282 (ETDEDLAWDSDN). Phosphoserine is present on residues S280 and S306. Residues 310–324 (ALTVKAKATSSATTA) show a composition bias toward low complexity. At S351 the chain carries Phosphoserine.

This is an uncharacterized protein from Homo sapiens (Human).